A 778-amino-acid polypeptide reads, in one-letter code: LPS-assembly protein LptD (778 aa).

An N-terminal signal peptide occupies residues 1–23 (MKTRYSVLSVAMTAAFYTQYAQA).

Belongs to the LptD family. In terms of assembly, component of the lipopolysaccharide transport and assembly complex. Interacts with LptE and LptA.

Its subcellular location is the cell outer membrane. Together with LptE, is involved in the assembly of lipopolysaccharide (LPS) at the surface of the outer membrane. In Actinobacillus pleuropneumoniae serotype 7 (strain AP76), this protein is LPS-assembly protein LptD.